The sequence spans 612 residues: MPKYRSSTTTQGPNMSGARALWRATGMSSDDFNKPIIAVVNSFTEFVPGHIHLRELGQLVSQYIISSGGVSKEFNTIAIDDGIAMGHSGMLYSLPSRDLIADSVEFMINAHCVDAMVCISNCDKITPGMLMAALRLNIPCVFVSGGPMESGKIVISDKEIKLNLVDAITCGVNPDSSDDMINEIEKSACPTCGSCSGMFTANSMNCLMEAIGLSLPGNGTILATHIDRKKLFVQAGKLIVKITQEYYKNNNEKFLPRNVATKEAFCNAMALDIAMGGSTNTVLHLLAAAREGCVDFTMLDVDLLSRKIPNLCKLSPNTTFYHIEDFHRAGGVFGVLDELNKVNLLYKQTFNILGLNLEEMLSKYSILTGNDKNIIKMFYAAPSGQKTIKPFSQSCRWNSLDIDRKLGCIRDYNSAFSLDGGIAVLYGNLAKDGCIVKTAGVHEKNLIFRGKAVVYESQDEAVHAILNNKIVKGNVIIIRYEGPKGGPGMQEMLYPTSYLKSMKLDQDCALITDGRFSGGTSGLSIGHISPEAANQGIIALVRTGDFIDINIPNRKIHLDITDNELLLRIKNEKDRGIDAYTPSHRKRIVTSALKLYSKFVTSADKGAVRNIR.

Mg(2+) is bound at residue Asp-81. A [2Fe-2S] cluster-binding site is contributed by Cys-122. Residues Asp-123 and Lys-124 each coordinate Mg(2+). Residue Lys-124 is modified to N6-carboxylysine. Cys-195 lines the [2Fe-2S] cluster pocket. Glu-491 provides a ligand contact to Mg(2+). The active-site Proton acceptor is the Ser-517.

It belongs to the IlvD/Edd family. Homodimer. [2Fe-2S] cluster serves as cofactor. Requires Mg(2+) as cofactor.

The enzyme catalyses (2R)-2,3-dihydroxy-3-methylbutanoate = 3-methyl-2-oxobutanoate + H2O. The catalysed reaction is (2R,3R)-2,3-dihydroxy-3-methylpentanoate = (S)-3-methyl-2-oxopentanoate + H2O. It functions in the pathway amino-acid biosynthesis; L-isoleucine biosynthesis; L-isoleucine from 2-oxobutanoate: step 3/4. It participates in amino-acid biosynthesis; L-valine biosynthesis; L-valine from pyruvate: step 3/4. Functionally, functions in the biosynthesis of branched-chain amino acids. Catalyzes the dehydration of (2R,3R)-2,3-dihydroxy-3-methylpentanoate (2,3-dihydroxy-3-methylvalerate) into 2-oxo-3-methylpentanoate (2-oxo-3-methylvalerate) and of (2R)-2,3-dihydroxy-3-methylbutanoate (2,3-dihydroxyisovalerate) into 2-oxo-3-methylbutanoate (2-oxoisovalerate), the penultimate precursor to L-isoleucine and L-valine, respectively. This Buchnera aphidicola subsp. Baizongia pistaciae (strain Bp) protein is Dihydroxy-acid dehydratase.